The following is a 368-amino-acid chain: RAB6-interacting golgin (368 aa).

Disordered stretches follow at residues 1–43 (MAQD…REKA), 55–133 (DGSA…DCKV), and 302–368 (KQMA…AVAT). Positions 11–27 (EELRRLKQNKDPFEPQR) are enriched in basic and acidic residues. Over residues 80–89 (SPSPVAPSPL) the composition is skewed to pro residues. Residues 114 to 133 (NSHHGHKSAEVRAPKPDCKV) show a composition bias toward basic and acidic residues. The stretch at 145-310 (RWEVLQQEQR…AKQMASVERL (166 aa)) forms a coiled coil. The tract at residues 188–368 (IQKELQALDD…AKNFSAAVAT (181 aa)) is necessary for interaction with RCHY1.

This sequence belongs to the GORAB family. Interacts with RCHY1. Interacts with SCYL1 and RAB6A/RAB6. Expressed in small intestine, kidney, skeletal muscle, lung, spleen, brain and heart. High expression is observed in osteoblasts and skin; also expressed in osteoclasts albeit at lower levels.

The protein resides in the cytoplasm. Its subcellular location is the golgi apparatus. This chain is RAB6-interacting golgin (Gorab), found in Mus musculus (Mouse).